Here is a 161-residue protein sequence, read N- to C-terminus: ATP synthase subunit b 1 (161 aa).

Residues 1 to 21 (MFATAEFWILACLVAFFAILG) traverse the membrane as a helical segment.

Belongs to the ATPase B chain family. As to quaternary structure, F-type ATPases have 2 components, F(1) - the catalytic core - and F(0) - the membrane proton channel. F(1) has five subunits: alpha(3), beta(3), gamma(1), delta(1), epsilon(1). F(0) has three main subunits: a(1), b(2) and c(10-14). The alpha and beta chains form an alternating ring which encloses part of the gamma chain. F(1) is attached to F(0) by a central stalk formed by the gamma and epsilon chains, while a peripheral stalk is formed by the delta and b chains.

The protein localises to the cell inner membrane. Its function is as follows. F(1)F(0) ATP synthase produces ATP from ADP in the presence of a proton or sodium gradient. F-type ATPases consist of two structural domains, F(1) containing the extramembraneous catalytic core and F(0) containing the membrane proton channel, linked together by a central stalk and a peripheral stalk. During catalysis, ATP synthesis in the catalytic domain of F(1) is coupled via a rotary mechanism of the central stalk subunits to proton translocation. Component of the F(0) channel, it forms part of the peripheral stalk, linking F(1) to F(0). The polypeptide is ATP synthase subunit b 1 (Parvibaculum lavamentivorans (strain DS-1 / DSM 13023 / NCIMB 13966)).